The primary structure comprises 185 residues: Homeobox expressed in ES cells 1 (185 aa).

A DNA-binding region (homeobox) is located at residues 108–167 (GRRPRTAFTQNQIEVLENVFRVNCYPGIDIREDLAQKLNLEEDRIQIWFQNRRAKLKRSH).

Belongs to the ANF homeobox family. In terms of assembly, can form heterodimers with PROP1 in binding to DNA. Interacts with TLE1.

It localises to the nucleus. Functionally, required for the normal development of the forebrain, eyes and other anterior structures such as the olfactory placodes and pituitary gland. Possible transcriptional repressor. Binds to the palindromic PIII sequence, 5'-AGCTTGAGTCTAATTGAATTAACTGTAC-3'. HESX1 and PROP1 bind as heterodimers on this palindromic site, and, in vitro, HESX1 can antagonize PROP1 activation. This chain is Homeobox expressed in ES cells 1 (HESX1), found in Pan troglodytes (Chimpanzee).